The primary structure comprises 300 residues: Oxidoreductase BOA1 (300 aa).

The protein belongs to the NmrA-type oxidoreductase family. Isoflavone reductase subfamily.

It participates in polyketide biosynthesis. Oxidoreductase; part of the gene cluster A that mediates the biosynthesis of botcinic acid and its botcinin derivatives, acetate-derived polyketides that contribute to virulence when combined with the sesquiterpene botrydial. Botcinic acid and its derivatives have been shown to induce chlorosis and necrosis during host plant infection, but also have antifungal activities. Two polyketide synthases, BOA6 and BOA9, are involved in the biosynthesis of botcinins. BOA6 mediates the formation of the per-methylated tetraketide core by condensation of four units of malonyl-CoA with one unit of acetyl-CoA, which would be methylated in activated methylene groups to yield a bicyclic acid intermediate that could then either be converted to botrylactone derivatives or lose the starter acetate unit through a retro-Claisen type C-C bond cleavage to yield botcinin derivatives. The second polyketide synthase, BOA9, is probably required for the biosynthesis of the tetraketide side chain of botcinins. The methyltransferase (MT) domain within BOA6 is probably responsible for the incorporation of four methyl groups. The trans-enoyl reductase BOA5 might take over the enoyl reductase function of BOA6 that misses an ER domain. The monooxygenases BOA2, BOA3 and BOA4 might be involved in further hydroxylations at C4, C5 and C8, whereas BOA7, close to BOA9, could potentially be involved in the hydroxylation at C4 in the side chain of botcinins. The sequence is that of Oxidoreductase BOA1 from Botryotinia fuckeliana (strain B05.10) (Noble rot fungus).